A 362-amino-acid chain; its full sequence is Aminomethyltransferase (362 aa).

Belongs to the GcvT family. In terms of assembly, the glycine cleavage system is composed of four proteins: P, T, L and H.

It carries out the reaction N(6)-[(R)-S(8)-aminomethyldihydrolipoyl]-L-lysyl-[protein] + (6S)-5,6,7,8-tetrahydrofolate = N(6)-[(R)-dihydrolipoyl]-L-lysyl-[protein] + (6R)-5,10-methylene-5,6,7,8-tetrahydrofolate + NH4(+). Its function is as follows. The glycine cleavage system catalyzes the degradation of glycine. The polypeptide is Aminomethyltransferase (Chlorobium limicola (strain DSM 245 / NBRC 103803 / 6330)).